We begin with the raw amino-acid sequence, 204 residues long: MIGRLQGILLEKQPPEILLDVHGIGYELLLPMTSFYNLPEIGQETVLFTHLVVREDAHLLFGFSAKTDRTLFRELIKTNGVGPKLALAILSAMSVNEFAYAIEHEELSKLVKIPGVGKKTAERLLVELKGKFKGIKQPDFFVESSHVGAVDPVTTSPEVPAEEAVAALMALGYKASDAEKMVKRIAKPHLTSEQLIREALKAAL.

The domain I stretch occupies residues 1–64 (MIGRLQGILL…EDAHLLFGFS (64 aa)). The segment at 65-143 (AKTDRTLFRE…GIKQPDFFVE (79 aa)) is domain II. Residues 144–155 (SSHVGAVDPVTT) form a flexible linker region. The segment at 156–204 (SPEVPAEEAVAALMALGYKASDAEKMVKRIAKPHLTSEQLIREALKAAL) is domain III.

This sequence belongs to the RuvA family. In terms of assembly, homotetramer. Forms an RuvA(8)-RuvB(12)-Holliday junction (HJ) complex. HJ DNA is sandwiched between 2 RuvA tetramers; dsDNA enters through RuvA and exits via RuvB. An RuvB hexamer assembles on each DNA strand where it exits the tetramer. Each RuvB hexamer is contacted by two RuvA subunits (via domain III) on 2 adjacent RuvB subunits; this complex drives branch migration. In the full resolvosome a probable DNA-RuvA(4)-RuvB(12)-RuvC(2) complex forms which resolves the HJ.

It localises to the cytoplasm. The RuvA-RuvB-RuvC complex processes Holliday junction (HJ) DNA during genetic recombination and DNA repair, while the RuvA-RuvB complex plays an important role in the rescue of blocked DNA replication forks via replication fork reversal (RFR). RuvA specifically binds to HJ cruciform DNA, conferring on it an open structure. The RuvB hexamer acts as an ATP-dependent pump, pulling dsDNA into and through the RuvAB complex. HJ branch migration allows RuvC to scan DNA until it finds its consensus sequence, where it cleaves and resolves the cruciform DNA. This is Holliday junction branch migration complex subunit RuvA from Mannheimia succiniciproducens (strain KCTC 0769BP / MBEL55E).